Here is a 320-residue protein sequence, read N- to C-terminus: MSSIRNTHWCHRCQRAVWLRARDAVCSYCGGGFVEEIDIGPSRAHRDVERDPTFDLMEAFSAFMRSRLAERSYDREISGRLGSAGSESFSNLAPLLIFGGQAPFRLAGGDNSSVEAFVNGAAPGIGIARGTNAGDYFFGPGLEELIEQLSSGTHHRGPPPAPKSSIDALPTIKITQKHLKSSDSHCPVCKDEFELKSEAKQMPCHHIYHSDCIVPWLVQHNSCPVCRKELPSRGSSSSTQSSQNRSTNGRENSRRRNIFSNLWPFRSSSSSSTQNRRDTNNTATAEEGHYHHHQQQQQQHQHQHQQQQSHMGYSGWPFDY.

The residue at position 2 (Ser2) is an N-acetylserine. An RING-type; atypical zinc finger spans residues 186–227; that stretch reads CPVCKDEFELKSEAKQMPCHHIYHSDCIVPWLVQHNSCPVCR. Positions 229–320 are disordered; the sequence is ELPSRGSSSS…MGYSGWPFDY (92 aa). Low complexity-rich tracts occupy residues 232-249 and 295-308; these read SRGSSSSTQSSQNRSTNG and QQQQQHQHQHQQQQ.

Expressed in seedlings and in flowers.

It catalyses the reaction S-ubiquitinyl-[E2 ubiquitin-conjugating enzyme]-L-cysteine + [acceptor protein]-L-lysine = [E2 ubiquitin-conjugating enzyme]-L-cysteine + N(6)-ubiquitinyl-[acceptor protein]-L-lysine.. In terms of biological role, E3 ubiquitin-protein ligase that promotes osmotic stress and abscisic acid (ABA) responses. Negatively regulates drought-mediated control of early seedling development, probably by influencing proline content, water loss, membrane ion leakage and the expression of dehydration stress-related genes (e.g. RAB18, RD29A, RD29B, AOX1A, ERD15, ERD1, COR15A, P5CS1 and P5CR). Modulates bZIP11 accumulation during rehydration following drought. This Arabidopsis thaliana (Mouse-ear cress) protein is E3 ubiquitin-protein ligase RZF1.